Here is a 428-residue protein sequence, read N- to C-terminus: Trigger factor (428 aa).

Residues 163–248 form the PPIase FKBP-type domain; sequence GDTAVIDFEG…INEVKAKELP (86 aa).

Belongs to the FKBP-type PPIase family. Tig subfamily.

The protein resides in the cytoplasm. The enzyme catalyses [protein]-peptidylproline (omega=180) = [protein]-peptidylproline (omega=0). Functionally, involved in protein export. Acts as a chaperone by maintaining the newly synthesized protein in an open conformation. Functions as a peptidyl-prolyl cis-trans isomerase. In Oceanobacillus iheyensis (strain DSM 14371 / CIP 107618 / JCM 11309 / KCTC 3954 / HTE831), this protein is Trigger factor.